Consider the following 128-residue polypeptide: Small ribosomal subunit protein uS11 (128 aa).

It belongs to the universal ribosomal protein uS11 family. As to quaternary structure, part of the 30S ribosomal subunit. Interacts with proteins S7 and S18. Binds to IF-3.

Its function is as follows. Located on the platform of the 30S subunit, it bridges several disparate RNA helices of the 16S rRNA. Forms part of the Shine-Dalgarno cleft in the 70S ribosome. This is Small ribosomal subunit protein uS11 from Desulforudis audaxviator (strain MP104C).